The sequence spans 341 residues: S-adenosylmethionine:tRNA ribosyltransferase-isomerase (341 aa).

The protein belongs to the QueA family. As to quaternary structure, monomer.

It is found in the cytoplasm. The enzyme catalyses 7-aminomethyl-7-carbaguanosine(34) in tRNA + S-adenosyl-L-methionine = epoxyqueuosine(34) in tRNA + adenine + L-methionine + 2 H(+). It functions in the pathway tRNA modification; tRNA-queuosine biosynthesis. Functionally, transfers and isomerizes the ribose moiety from AdoMet to the 7-aminomethyl group of 7-deazaguanine (preQ1-tRNA) to give epoxyqueuosine (oQ-tRNA). This chain is S-adenosylmethionine:tRNA ribosyltransferase-isomerase, found in Clostridioides difficile (strain 630) (Peptoclostridium difficile).